The chain runs to 454 residues: Tegument protein VP16 homolog (454 aa).

This sequence belongs to the herpesviridae tegument protein VP16 protein family. Associates with the VP16-induced complex; binding to host HCFC1 activates VP16 for association with the octamer motif-binding host protein POU2F1, to form a multiprotein-DNA complex responsible for activating transcription of the viral immediate early genes.

The protein resides in the virion tegument. It localises to the host nucleus. In terms of biological role, transcriptional activator of immediate-early (IE) gene products (alpha genes). Acts as a key activator of lytic infection by initiating the lytic program through the assembly of the transcriptional regulatory VP16-induced complex composed of VP16 and two cellular factors, HCFC1 and POU2F1. VP16-induced complex represents a regulatory switch: when it is on, it promotes IE-gene expression and thus lytic infection, and when it is off, it limits IE-gene transcription favoring latent infection. Its function is as follows. May play a role in the aggregation of tegument proteins around nucleocapsids during virus morphogenesis. This is Tegument protein VP16 homolog (12) from Equine herpesvirus 4 (strain 1942) (EHV-4).